The sequence spans 183 residues: ATP synthase subunit b, chloroplastic (183 aa).

A helical membrane pass occupies residues 25-45 (DILATNLINLTVVVGVLIFFG).

The protein belongs to the ATPase B chain family. As to quaternary structure, F-type ATPases have 2 components, F(1) - the catalytic core - and F(0) - the membrane proton channel. F(1) has five subunits: alpha(3), beta(3), gamma(1), delta(1), epsilon(1). F(0) has four main subunits: a(1), b(1), b'(1) and c(10-14). The alpha and beta chains form an alternating ring which encloses part of the gamma chain. F(1) is attached to F(0) by a central stalk formed by the gamma and epsilon chains, while a peripheral stalk is formed by the delta, b and b' chains.

Its subcellular location is the plastid. It is found in the chloroplast thylakoid membrane. F(1)F(0) ATP synthase produces ATP from ADP in the presence of a proton or sodium gradient. F-type ATPases consist of two structural domains, F(1) containing the extramembraneous catalytic core and F(0) containing the membrane proton channel, linked together by a central stalk and a peripheral stalk. During catalysis, ATP synthesis in the catalytic domain of F(1) is coupled via a rotary mechanism of the central stalk subunits to proton translocation. Its function is as follows. Component of the F(0) channel, it forms part of the peripheral stalk, linking F(1) to F(0). The polypeptide is ATP synthase subunit b, chloroplastic (Saccharum hybrid (Sugarcane)).